The chain runs to 140 residues: ATP synthase epsilon chain (140 aa).

The protein belongs to the ATPase epsilon chain family. In terms of assembly, F-type ATPases have 2 components, CF(1) - the catalytic core - and CF(0) - the membrane proton channel. CF(1) has five subunits: alpha(3), beta(3), gamma(1), delta(1), epsilon(1). CF(0) has three main subunits: a, b and c.

Its subcellular location is the cell inner membrane. Produces ATP from ADP in the presence of a proton gradient across the membrane. In Alkalilimnicola ehrlichii (strain ATCC BAA-1101 / DSM 17681 / MLHE-1), this protein is ATP synthase epsilon chain.